A 199-amino-acid polypeptide reads, in one-letter code: Recombination protein RecR (199 aa).

The C4-type zinc-finger motif lies at 57–72 (CSICGNITESDPCEIC). A Toprim domain is found at 80 to 176 (STIMVVEQPK…KVTRLAAGLA (97 aa)).

Belongs to the RecR family.

Functionally, may play a role in DNA repair. It seems to be involved in an RecBC-independent recombinational process of DNA repair. It may act with RecF and RecO. The polypeptide is Recombination protein RecR (Lactobacillus johnsonii (strain CNCM I-12250 / La1 / NCC 533)).